Here is a 344-residue protein sequence, read N- to C-terminus: Methionine import ATP-binding protein MetN (344 aa).

The ABC transporter domain maps to 2 to 241; that stretch reads IELQGLSQRF…PQHDVTRAMI (240 aa). 38–45 serves as a coordination point for ATP; sequence GRSGAGKS.

The protein belongs to the ABC transporter superfamily. Methionine importer (TC 3.A.1.24) family. The complex is composed of two ATP-binding proteins (MetN), two transmembrane proteins (MetI) and a solute-binding protein (MetQ).

It localises to the cell inner membrane. It carries out the reaction L-methionine(out) + ATP + H2O = L-methionine(in) + ADP + phosphate + H(+). It catalyses the reaction D-methionine(out) + ATP + H2O = D-methionine(in) + ADP + phosphate + H(+). Functionally, part of the ABC transporter complex MetNIQ involved in methionine import. Responsible for energy coupling to the transport system. This Cupriavidus necator (strain ATCC 17699 / DSM 428 / KCTC 22496 / NCIMB 10442 / H16 / Stanier 337) (Ralstonia eutropha) protein is Methionine import ATP-binding protein MetN.